The chain runs to 420 residues: Imidazolonepropionase (420 aa).

Fe(3+)-binding residues include His-77 and His-79. Positions 77 and 79 each coordinate Zn(2+). The 4-imidazolone-5-propanoate site is built by Arg-86, Tyr-149, and His-182. Tyr-149 provides a ligand contact to N-formimidoyl-L-glutamate. His-245 serves as a coordination point for Fe(3+). A Zn(2+)-binding site is contributed by His-245. Glu-248 provides a ligand contact to 4-imidazolone-5-propanoate. Fe(3+) is bound at residue Asp-319. Asp-319 lines the Zn(2+) pocket. An N-formimidoyl-L-glutamate-binding site is contributed by Asn-321.

The protein belongs to the metallo-dependent hydrolases superfamily. HutI family. Zn(2+) is required as a cofactor. It depends on Fe(3+) as a cofactor.

Its subcellular location is the cytoplasm. The catalysed reaction is 4-imidazolone-5-propanoate + H2O = N-formimidoyl-L-glutamate. Its pathway is amino-acid degradation; L-histidine degradation into L-glutamate; N-formimidoyl-L-glutamate from L-histidine: step 3/3. Its function is as follows. Catalyzes the hydrolytic cleavage of the carbon-nitrogen bond in imidazolone-5-propanoate to yield N-formimidoyl-L-glutamate. It is the third step in the universal histidine degradation pathway. The polypeptide is Imidazolonepropionase (Haloarcula marismortui (strain ATCC 43049 / DSM 3752 / JCM 8966 / VKM B-1809) (Halobacterium marismortui)).